The following is a 176-amino-acid chain: NADH:riboflavin 5'-phosphate oxidoreductase (176 aa).

Provides the reduced form of flavin mononucleotide for the PIIA synthase reaction. This is NADH:riboflavin 5'-phosphate oxidoreductase (snaC) from Streptomyces pristinaespiralis.